The following is a 907-amino-acid chain: Envelope glycoprotein B (907 aa).

Residues 1 to 22 (MESRIWCLVVCVNLCIVCLGAA) form the signal peptide. Over 23–751 (VSSSSTRGTS…EGVATFLKNP (729 aa)) the chain is Virion surface. The tract at residues 29–62 (RGTSATHSHHSSHTTSAAHSRSGSVSQRVTSSQT) is disordered. A compositionally biased stretch (low complexity) spans 41-62 (HTTSAAHSRSGSVSQRVTSSQT). N-linked (GlcNAc...) asparagine; by host glycosylation is found at asparagine 68, asparagine 73, and asparagine 85. 4 disulfides stabilise this stretch: cysteine 94–cysteine 551, cysteine 111–cysteine 507, cysteine 185–cysteine 250, and cysteine 344–cysteine 391. An involved in fusion and/or binding to host membrane region spans residues 152–158 (SYAYIHT). Asparagine 208 carries N-linked (GlcNAc...) asparagine; by host glycosylation. An involved in fusion and/or binding to host membrane region spans residues 237–244 (GSTWLYRE). 14 N-linked (GlcNAc...) asparagine; by host glycosylation sites follow: asparagine 281, asparagine 286, asparagine 302, asparagine 341, asparagine 383, asparagine 405, asparagine 409, asparagine 417, asparagine 447, asparagine 452, asparagine 456, asparagine 466, asparagine 555, and asparagine 586. A disulfide bridge links cysteine 574 with cysteine 611. Hydrophobic membrane proximal region regions lie at residues 697–749 (VEDK…TFLK) and 708–748 (YLKG…ATFL). The chain crosses the membrane as a helical span at residues 752–772 (FGAFTIILVAIAVVIIIYLIY). Residues 773–907 (TRQRRLCMQP…LKDSDEEENV (135 aa)) lie on the Intravirion side of the membrane. 2 stretches are compositionally biased toward polar residues: residues 798 to 810 (VTSG…SLQA) and 860 to 877 (RAQQ…GTQD). Disordered stretches follow at residues 798–838 (VTSG…TAAP) and 860–907 (RAQQ…EENV). The segment covering 878-887 (KGQKPNLLDR) has biased composition (basic and acidic residues). An Internalization motif motif is present at residues 895–898 (YRHL).

It belongs to the herpesviridae glycoprotein B family. As to quaternary structure, homotrimer; disulfide-linked. Binds to heparan sulfate proteoglycans. Interacts with gH/gL heterodimer. Interacts with host C-type lectin CD209/DC-SIGN. Interacts with host ITGB1, EGFR, and PDGFRA. A proteolytic cleavage by host furin generates two subunits that remain linked by disulfide bonds.

The protein localises to the virion membrane. It is found in the host cell membrane. Its subcellular location is the host endosome membrane. The protein resides in the host Golgi apparatus membrane. Functionally, envelope glycoprotein that plays a role in host cell entry, cell to-cell virus transmission, and fusion of infected cells. May be involved in the initial attachment via binding to heparan sulfate together with the gM/gN complex that binds heparin with higher affinity. Interacts with host integrin ITGB1, PDGFRA and EGFR that likely serve as postattachment entry receptors. Also participates in the fusion of viral and cellular membranes leading to virus entry into the host cell. Membrane fusion is mediated by the fusion machinery composed at least of gB and the heterodimer gH/gL. This is Envelope glycoprotein B from Homo sapiens (Human).